The primary structure comprises 121 residues: Large ribosomal subunit protein uL18 (121 aa).

Belongs to the universal ribosomal protein uL18 family. As to quaternary structure, part of the 50S ribosomal subunit; part of the 5S rRNA/L5/L18/L25 subcomplex. Contacts the 5S and 23S rRNAs.

In terms of biological role, this is one of the proteins that bind and probably mediate the attachment of the 5S RNA into the large ribosomal subunit, where it forms part of the central protuberance. The protein is Large ribosomal subunit protein uL18 of Ureaplasma urealyticum serovar 10 (strain ATCC 33699 / Western).